Consider the following 512-residue polypeptide: NADH-quinone oxidoreductase subunit N (512 aa).

14 consecutive transmembrane segments (helical) span residues 32–52, 57–77, 97–117, 126–146, 151–171, 186–206, 231–251, 264–284, 296–316, 324–344, 348–368, 392–412, 431–451, and 473–493; these read VLPA…SVLF, FIIV…AVFY, VLSF…AAIV, IEFP…TLMT, FILV…LIGM, FLLG…LFGG, IGLV…PYHA, VTGY…LILY, WAWL…LLAL, MLAY…SAGI, VLFY…ILAY, AIAI…GGFW, ILLI…LRIG, and VGVT…WFLL.

It belongs to the complex I subunit 2 family. NDH-1 is composed of 14 different subunits. Subunits NuoA, H, J, K, L, M, N constitute the membrane sector of the complex.

The protein resides in the cell inner membrane. It catalyses the reaction a quinone + NADH + 5 H(+)(in) = a quinol + NAD(+) + 4 H(+)(out). In terms of biological role, NDH-1 shuttles electrons from NADH, via FMN and iron-sulfur (Fe-S) centers, to quinones in the respiratory chain. The immediate electron acceptor for the enzyme in this species is believed to be ubiquinone. Couples the redox reaction to proton translocation (for every two electrons transferred, four hydrogen ions are translocated across the cytoplasmic membrane), and thus conserves the redox energy in a proton gradient. The sequence is that of NADH-quinone oxidoreductase subunit N from Leptospira interrogans serogroup Icterohaemorrhagiae serovar Lai (strain 56601).